The following is a 238-amino-acid chain: Flagellar L-ring protein (238 aa).

Positions 1-16 are cleaved as a signal peptide; it reads MNKAILAVAMVLLLAG. A lipid anchor (N-palmitoyl cysteine) is attached at Cys-17. Cys-17 carries S-diacylglycerol cysteine lipidation.

The protein belongs to the FlgH family. As to quaternary structure, the basal body constitutes a major portion of the flagellar organelle and consists of four rings (L,P,S, and M) mounted on a central rod.

It is found in the cell outer membrane. It localises to the bacterial flagellum basal body. Functionally, assembles around the rod to form the L-ring and probably protects the motor/basal body from shearing forces during rotation. The polypeptide is Flagellar L-ring protein (Brucella canis (strain ATCC 23365 / NCTC 10854 / RM-666)).